Consider the following 105-residue polypeptide: N(2)-fixation sustaining protein CowN (105 aa).

Belongs to the CowN family.

Functionally, is required to sustain N(2)-dependent growth in the presence of low levels of carbon monoxide (CO). Probably acts by protecting the N(2) fixation ability of the nitrogenase complex, which is inactivated in the presence of CO. In Tolumonas auensis (strain DSM 9187 / NBRC 110442 / TA 4), this protein is N(2)-fixation sustaining protein CowN.